We begin with the raw amino-acid sequence, 248 residues long: N-acylneuraminate-9-phosphatase (248 aa).

Position 12 (Asp12) interacts with Mg(2+). Phosphate-binding residues include Leu13, Asp14, Thr131, Asn132, and Lys164. Residue Asp14 coordinates Mg(2+). Position 189 (Asp189) interacts with Mg(2+).

The protein belongs to the HAD-like hydrolase superfamily. NANP family. Mg(2+) is required as a cofactor.

The enzyme catalyses N-acetylneuraminate 9-phosphate + H2O = N-acetylneuraminate + phosphate. It carries out the reaction N-glycoloylneuraminate 9-phosphate + H2O = N-glycoloylneuraminate + phosphate. It functions in the pathway amino-sugar metabolism; N-acetylneuraminate biosynthesis. Its activity is regulated as follows. Inhibited by calcium. Inhibited by vanadate, sodium orthovanadate and phosphonate. Catalyzes the dephosphorylation of N-acylneuraminate 9-phosphate (Neu5Ac-9-P) to N-acetylneuraminic acid (Neu5Ac or sialic acid). Can also use N-glycoloylneuraminate 9-phosphate as substrate. The protein is N-acylneuraminate-9-phosphatase of Homo sapiens (Human).